Reading from the N-terminus, the 380-residue chain is MAAPWWRAALCECRRWRGFSTSAVLGRRTPPLGPMPNSDIDLSNLERLEKYRSFDRYRRRAEQEAQAPHWWRTYREYFGEKTDPKEKIDIGLPPPKVSRTQQLLERKQAIQELRANVEEERAARLRTASVPLDAVRAEWERTCGPYHKQRLAEYYGLYRDLFHGATFVPRVPLHVAYAVGEDDLMPVYCGNEVTPTEAAQAPEVTYEAEEGSLWTLLLTSLDGHLLEPDAEYLHWLLTNIPGNRVAEGQVTCPYLPPFPARGSGIHRLAFLLFKQDQPIDFSEDARPSPCYQLAQRTFRTFDFYKKHQETMTPAGLSFFQCRWDDSVTYIFHQLLDMREPVFEFVRPPPYHPKQKRFPHRQPLRYLDRYRDSHEPTYGIY.

Residues 1–26 constitute a mitochondrion transit peptide; it reads MAAPWWRAALCECRRWRGFSTSAVLG. The stretch at 99 to 127 forms a coiled coil; that stretch reads RTQQLLERKQAIQELRANVEEERAARLRT.

This sequence belongs to the phosphatidylethanolamine-binding protein family. Mitochondrion-specific ribosomal protein mL38 subfamily. In terms of assembly, component of the mitochondrial large ribosomal subunit (mt-LSU). Mature mammalian 55S mitochondrial ribosomes consist of a small (28S) and a large (39S) subunit. The 28S small subunit contains a 12S ribosomal RNA (12S mt-rRNA) and 30 different proteins. The 39S large subunit contains a 16S rRNA (16S mt-rRNA), a copy of mitochondrial valine transfer RNA (mt-tRNA(Val)), which plays an integral structural role, and 52 different proteins. mL38 is located at the central protuberance.

It is found in the mitochondrion. The sequence is that of Large ribosomal subunit protein mL38 (MRPL38) from Homo sapiens (Human).